The primary structure comprises 555 residues: Membrane protein insertase YidC (555 aa).

Helical transmembrane passes span 7-24, 367-387, 437-457, 476-496, and 511-531; these read VLWV…DNWQ, WGWS…PLSA, LPVV…LASV, PFFI…SLNP, and PIAF…YYVV.

It belongs to the OXA1/ALB3/YidC family. Type 1 subfamily. In terms of assembly, interacts with the Sec translocase complex via SecD. Specifically interacts with transmembrane segments of nascent integral membrane proteins during membrane integration.

It is found in the cell inner membrane. In terms of biological role, required for the insertion and/or proper folding and/or complex formation of integral membrane proteins into the membrane. Involved in integration of membrane proteins that insert both dependently and independently of the Sec translocase complex, as well as at least some lipoproteins. Aids folding of multispanning membrane proteins. The sequence is that of Membrane protein insertase YidC from Burkholderia lata (strain ATCC 17760 / DSM 23089 / LMG 22485 / NCIMB 9086 / R18194 / 383).